The primary structure comprises 45 residues: Large ribosomal subunit protein bL34 (45 aa).

Residues 1–27 (MTKRTLGGTSRKRKRVSGFRVRMRSHT) form a disordered region. The segment covering 10–27 (SRKRKRVSGFRVRMRSHT) has biased composition (basic residues).

It belongs to the bacterial ribosomal protein bL34 family.

The protein is Large ribosomal subunit protein bL34 of Synechococcus sp. (strain CC9902).